The following is a 307-amino-acid chain: Protein FAM76A (307 aa).

2 disordered regions span residues 142–195 and 287–307; these read QRKH…ESIT and KQAA…ITSP. Positions 161–182 are enriched in polar residues; that stretch reads SRLSGGSHYNSQKTLSTSSIQN. A coiled-coil region spans residues 217-299; that stretch reads IIAQLKEEVA…AALSKSKKSE (83 aa).

It belongs to the FAM76 family.

The sequence is that of Protein FAM76A (FAM76A) from Bos taurus (Bovine).